We begin with the raw amino-acid sequence, 670 residues long: Probable Rho-GTPase-activating protein 9 (670 aa).

Residues 3-392 (DGFSNSFWSR…SFKNLDSLRD (390 aa)) enclose the F-BAR domain. The tract at residues 141–161 (NSKKSNLTDRKPIPTSRKSNK) is disordered. Residues 425 to 622 (SSLTEDNLIV…DLINEFENLF (198 aa)) enclose the Rho-GAP domain. The residue at position 640 (Thr640) is a Phosphothreonine. The segment covering 641–663 (PITTSPQKLKLPRSSSPCKNPSP) has biased composition (polar residues). The segment at 641-670 (PITTSPQKLKLPRSSSPCKNPSPTRRFRPF) is disordered. Ser645 bears the Phosphoserine mark.

It localises to the cytoplasm. This is Probable Rho-GTPase-activating protein 9 (rga9) from Schizosaccharomyces pombe (strain 972 / ATCC 24843) (Fission yeast).